The chain runs to 820 residues: MSLSSLFNGKYDTKFLLNMSSAAKVELIVEKVAALADACLETPLPTDWFRNILDPELEFNSNFEEIHSIGDEEFAQPLPFLPFRVLLITGTAGAGKTSSIQTLAANSDCLITATTSIAAQNLSGLLNRTKSAQVKTIFKTFGFNSSHVSMNERISCSVTTLDSIADQQKHDLSTYWNVIADIAERALNAANGKTKVIPDLCESSVIVIDEAGVILRHILHTVVFFYWFYNGLHKTQLYKNRVIPCIVCVGSPTQSGALISSFNPLTQNKDVKKGFDILSALICDDILSNYCKISENWVIFVNNKRCTDVEFGEFLKHIEFGLPLKPELIEYVDRFVRPATYIRNPTNEIGMTRLFLSHYEVKSYFKVLHEQVELTNKDNLFTFPVYFIIQNKAFEDYKNEISNFTLEIEPWFKTNLHRLNTYSQFADQDLSKTIQIEEIVLDDGSVEETLITCHLKHIKHSSIGVTSRTKSSTVGFSGTYEKFVELLQSDLFIEKTACEYSVHAYSFLTGLMYGGMYSFCLSEFTTSEVMTEIRKIKLPNIDFLQTMTAEVSLQTFDESDEYYDLHIAPTDEEMLASDPCPDPFFLKYKQLPLTNVLTFEEISYLYTVFKEIFISRFAILQRHSKEMFGKSNLITYNRNNVSSKRCGEICSHVKSFYGMLTYAVPANNYTLEGYTYDNVIFLGTDKMLPPIIYKRGLPKIVIKDEMGFISILDNNVSKLTDTVNGNSFHICTTIDYAIVSKVAMTVTKSQGLSIQRVALDFGNDPKNLKLSSIYVGMSRVVDPNNLIMNLNPLRLNYENDNIIASHIVKALKNKDTMLIF.

90–97 (GTAGAGKT) lines the ATP pocket.

This sequence belongs to the herpesviridae helicase family. Associates with the primase and the primase-associated factor to form the helicase-primase complex.

It localises to the host nucleus. Component of the helicase/primase complex. Unwinds the DNA at the replication forks and generates single-stranded DNA for both leading and lagging strand synthesis. The primase synthesizes short RNA primers on the lagging strand that the polymerase elongates using dNTPs. Possesses helicase-like motifs and therefore may act as the helicase subunit of the complex. The sequence is that of DNA replication helicase from Human herpesvirus 7 (strain JI) (HHV-7).